A 333-amino-acid polypeptide reads, in one-letter code: Ferrochelatase (333 aa).

Fe cation contacts are provided by histidine 202 and glutamate 284.

It belongs to the ferrochelatase family.

The protein resides in the cytoplasm. The enzyme catalyses heme b + 2 H(+) = protoporphyrin IX + Fe(2+). It participates in porphyrin-containing compound metabolism; protoheme biosynthesis; protoheme from protoporphyrin-IX: step 1/1. In terms of biological role, catalyzes the ferrous insertion into protoporphyrin IX. The protein is Ferrochelatase of Francisella tularensis subsp. novicida (strain U112).